The following is a 607-amino-acid chain: UvrABC system protein C (607 aa).

The GIY-YIG domain maps to 14–93 (HKPGVYLMLD…IKKHKPRYNI (80 aa)). The region spanning 203-238 (RDLLAELKRQMLQASERLNFEQAGQFRDQIRALKTT) is the UVR domain.

Belongs to the UvrC family. As to quaternary structure, interacts with UvrB in an incision complex.

The protein resides in the cytoplasm. Its function is as follows. The UvrABC repair system catalyzes the recognition and processing of DNA lesions. UvrC both incises the 5' and 3' sides of the lesion. The N-terminal half is responsible for the 3' incision and the C-terminal half is responsible for the 5' incision. The sequence is that of UvrABC system protein C from Desulfotalea psychrophila (strain LSv54 / DSM 12343).